Reading from the N-terminus, the 142-residue chain is Large ribosomal subunit protein uL13 (142 aa).

This sequence belongs to the universal ribosomal protein uL13 family. In terms of assembly, part of the 50S ribosomal subunit.

This protein is one of the early assembly proteins of the 50S ribosomal subunit, although it is not seen to bind rRNA by itself. It is important during the early stages of 50S assembly. In Ralstonia pickettii (strain 12J), this protein is Large ribosomal subunit protein uL13.